The primary structure comprises 509 residues: Cytochrome P450 4A10 (509 aa).

The next 2 helical transmembrane spans lie at Leu-15–Val-35 and Leu-121–His-141. Glu-320 is a heme binding site. A Phosphoserine modification is found at Ser-439. Residue Cys-456 coordinates heme.

It belongs to the cytochrome P450 family. It depends on heme as a cofactor. As to expression, highly expressed in the kidneys of both genders.

It localises to the endoplasmic reticulum membrane. It is found in the microsome membrane. It catalyses the reaction an omega-methyl-long-chain fatty acid + reduced [NADPH--hemoprotein reductase] + O2 = an omega-hydroxy-long-chain fatty acid + oxidized [NADPH--hemoprotein reductase] + H2O + H(+). It carries out the reaction dodecanoate + reduced [NADPH--hemoprotein reductase] + O2 = 12-hydroxydodecanoate + oxidized [NADPH--hemoprotein reductase] + H2O + H(+). The catalysed reaction is dodecanoate + reduced [NADPH--hemoprotein reductase] + O2 = 11-hydroxydodecanoate + oxidized [NADPH--hemoprotein reductase] + H2O + H(+). The enzyme catalyses tetradecanoate + reduced [NADPH--hemoprotein reductase] + O2 = 14-hydroxytetradecanoate + oxidized [NADPH--hemoprotein reductase] + H2O + H(+). It catalyses the reaction hexadecanoate + reduced [NADPH--hemoprotein reductase] + O2 = 16-hydroxyhexadecanoate + oxidized [NADPH--hemoprotein reductase] + H2O + H(+). It carries out the reaction (9Z)-octadecenoate + reduced [NADPH--hemoprotein reductase] + O2 = 18-hydroxy-(9Z)-octadecenoate + oxidized [NADPH--hemoprotein reductase] + H2O + H(+). The catalysed reaction is (9Z,12Z)-octadecadienoate + reduced [NADPH--hemoprotein reductase] + O2 = 18-hydroxy-(9Z,12Z)-octadecadienoate + oxidized [NADPH--hemoprotein reductase] + H2O + H(+). The enzyme catalyses (9Z,12Z)-octadecadienoate + reduced [NADPH--hemoprotein reductase] + O2 = 17-hydroxy-(9Z,12Z)-octadecadienoate + oxidized [NADPH--hemoprotein reductase] + H2O + H(+). It catalyses the reaction (5Z,8Z,11Z,14Z)-eicosatetraenoate + reduced [NADPH--hemoprotein reductase] + O2 = 20-hydroxy-(5Z,8Z,11Z,14Z)-eicosatetraenoate + oxidized [NADPH--hemoprotein reductase] + H2O + H(+). It carries out the reaction 8,9-epoxy-(5Z,11Z,14Z)-eicosatrienoate + reduced [NADPH--hemoprotein reductase] + O2 = 20-hydroxy-8,9-epoxy-(5Z,11Z,14Z)-eicosatrienoate + oxidized [NADPH--hemoprotein reductase] + H2O + H(+). Its function is as follows. A cytochrome P450 monooxygenase involved in the metabolism of fatty acids. Catalyzes predominantly the oxidation of the terminal carbon (omega-oxidation) of long-chain fatty acids. Acts as a major omega-hydroxylase for dodecanoic (lauric) acid in liver. In kidney, may play an important role in omega-hydroxylation of (5Z,8Z,11Z,14Z)-eicosatetraenoic acid (arachidonate) to 20-hydroxyeicosatetraenoic acid (20-HETE), a signaling molecule acting both as vasoconstrictive and natriuretic with overall effect on arterial blood pressure. Also participates in the formation of anti-inflammatory hydroxyepoxyeicosatrienoic acids (HEETs) in kidney by converting 8,9-epoxyeicosatrienoic acid (EET) to 20,8,9-HEET, an activator of PPARA. Displays substantially lower fatty acid omega-1 hydroxylase activity. Mechanistically, uses molecular oxygen inserting one oxygen atom into a substrate, and reducing the second into a water molecule, with two electrons provided by NADPH via cytochrome P450 reductase (CPR; NADPH-ferrihemoprotein reductase). This is Cytochrome P450 4A10 from Mus musculus (Mouse).